Consider the following 157-residue polypeptide: Nascent polypeptide-associated complex subunit alpha (157 aa).

Residues 6 to 71 (TTDESHIHKT…LGSPVNLHQL (66 aa)) enclose the NAC-A/B domain. Basic and acidic residues predominate over residues 81 to 107 (SSKDQEGPGLYDEIHSDPQEDGVKEAE). The interval 81–116 (SSKDQEGPGLYDEIHSDPQEDGVKEAEEITVDPSDE) is disordered. Residues 118 to 157 (LSEEDIKLISSQVKASRNDIIKALVESEYDVVDAMMKLTK) enclose the UBA domain.

The protein belongs to the NAC-alpha family.

Its subcellular location is the cytoplasm. It localises to the nucleus. Functionally, may be involved in mitochondrial protein import by enhancing productive ribosome interactions with the outer mitochondrial membrane and blocks the inappropriate interaction of ribosomes translating non-secretory nascent polypeptides with translocation sites in the membrane of the endoplasmic reticulum. EGD2 may also be involved in transcription regulation. The protein is Nascent polypeptide-associated complex subunit alpha (EGD2) of Encephalitozoon cuniculi (strain GB-M1) (Microsporidian parasite).